We begin with the raw amino-acid sequence, 1282 residues long: Trafficking protein particle complex subunit 8 (1282 aa).

The segment at 245–287 is disordered; sequence TDAIAPGPNGASNQQSPSSPTSSVATISSTMPAVGSVSPNSHP. Low complexity predominate over residues 255 to 273; sequence ASNQQSPSSPTSSVATISS.

Its function is as follows. Plays a role in endoplasmic reticulum to Golgi apparatus trafficking at a very early stage. Involved in collagen secretion. The chain is Trafficking protein particle complex subunit 8 from Caenorhabditis elegans.